Consider the following 423-residue polypeptide: Gamma-glutamyl phosphate reductase (423 aa).

This sequence belongs to the gamma-glutamyl phosphate reductase family.

Its subcellular location is the cytoplasm. It catalyses the reaction L-glutamate 5-semialdehyde + phosphate + NADP(+) = L-glutamyl 5-phosphate + NADPH + H(+). The protein operates within amino-acid biosynthesis; L-proline biosynthesis; L-glutamate 5-semialdehyde from L-glutamate: step 2/2. Functionally, catalyzes the NADPH-dependent reduction of L-glutamate 5-phosphate into L-glutamate 5-semialdehyde and phosphate. The product spontaneously undergoes cyclization to form 1-pyrroline-5-carboxylate. In Burkholderia pseudomallei (strain 1710b), this protein is Gamma-glutamyl phosphate reductase.